Consider the following 476-residue polypeptide: MNPKTYIPDTFIEMIREIMPEHLSMDEFIASCRTPLRRSIRVNTLKISVEDFLVRVSDKDWTLTPVPWCDTGFWIEREDEKSVSLGNTAEHMAGLFYIQEASSMMPVTALLKNNDALDCVLDMASAPGSKTTQIACAMQNRGVLVANELAASRIKVLHANLQRCGVYNAALTHFDGCVFGGWAPESFDTILLDAPCSGEGAIRKDGDAMANWSLSSIEDIAAIQRNLIISAFQALKTGGMMVYSTCTLNLSENQHVCHFLKETFGDAVEFEPLGDLFEGAEKSLTEDGFLHVYPQIFDSEGFFVARIRKHAAVETPKVKKRMGKFPFTIVADADKAIIAEQLQATLSITLPAESDVWVREKEVWLFPANLRPLIGEIRFQRMGVKLAEQHKKGYRWQHEAVMTLATGKEDVAIDLAPEQAKEWFMGRDIRPENLLGKGEVVVTYRDYPIGIGKWVGNRIKNGLPRELVRDTNLFDI.

S-adenosyl-L-methionine contacts are provided by residues 124 to 130, glutamate 148, aspartate 175, and aspartate 193; that span reads ASAPGSK. The active-site Nucleophile is cysteine 246.

The protein belongs to the class I-like SAM-binding methyltransferase superfamily. RsmB/NOP family.

It localises to the cytoplasm. The enzyme catalyses cytidine(1407) in 16S rRNA + S-adenosyl-L-methionine = 5-methylcytidine(1407) in 16S rRNA + S-adenosyl-L-homocysteine + H(+). Functionally, specifically methylates the cytosine at position 1407 (m5C1407) of 16S rRNA. In Photobacterium profundum (strain SS9), this protein is Ribosomal RNA small subunit methyltransferase F.